An 882-amino-acid chain; its full sequence is MRKVHLFLVLVHFIYISTSRSDSISERDILLQFKGSISDDPYNSLASWVSDGDLCNSFNGITCNPQGFVDKIVLWNTSLAGTLAPGLSNLKFIRVLNLFGNRFTGNLPLDYFKLQTLWTINVSSNALSGPIPEFISELSSLRFLDLSKNGFTGEIPVSLFKFCDKTKFVSLAHNNIFGSIPASIVNCNNLVGFDFSYNNLKGVLPPRICDIPVLEYISVRNNLLSGDVSEEIQKCQRLILVDLGSNLFHGLAPFAVLTFKNITYFNVSWNRFGGEIGEIVDCSESLEFLDASSNELTGRIPTGVMGCKSLKLLDLESNKLNGSIPGSIGKMESLSVIRLGNNSIDGVIPRDIGSLEFLQVLNLHNLNLIGEVPEDISNCRVLLELDVSGNDLEGKISKKLLNLTNIKILDLHRNRLNGSIPPELGNLSKVQFLDLSQNSLSGPIPSSLGSLNTLTHFNVSYNNLSGVIPPVPMIQAFGSSAFSNNPFLCGDPLVTPCNSRGAAAKSRNSDALSISVIIVIIAAAVILFGVCIVLALNLRARKRRKDEEILTVETTPLASSIDSSGVIIGKLVLFSKNLPSKYEDWEAGTKALLDKENIIGMGSIGSVYRASFEGGVSIAVKKLETLGRIRNQEEFEQEIGRLGGLQHPNLSSFQGYYFSSTMQLILSEFVPNGSLYDNLHLRIFPGTSSSYGNTDLNWHRRFQIALGTAKALSFLHNDCKPAILHLNVKSTNILLDERYEAKLSDYGLEKFLPVMDSFGLTKKFHNAVGYIAPELAQQSLRASEKCDVYSYGVVLLELVTGRKPVESPSENQVLILRDYVRDLLETGSASDCFDRRLREFEENELIQVMKLGLLCTSENPLKRPSMAEVVQVLESIRNGFGS.

An N-terminal signal peptide occupies residues M1–S21. Topologically, residues D22 to S515 are extracellular. N76 carries an N-linked (GlcNAc...) asparagine glycan. LRR repeat units lie at residues F92–K113, T116–L138, S140–F162, K165–C187, N189–D210, V213–C235, R237–T258, N261–S283, S285–K308, S309–M331, S333–L355, F357–C379, V381–T404, N405–L427, K429–L451, and T453–Q475. A glycan (N-linked (GlcNAc...) asparagine) is linked at N121. Residues N261 and N266 are each glycosylated (N-linked (GlcNAc...) asparagine). 2 N-linked (GlcNAc...) asparagine glycosylation sites follow: N321 and N341. 3 N-linked (GlcNAc...) asparagine glycosylation sites follow: N402, N417, and N426. N-linked (GlcNAc...) asparagine glycosylation is found at N458 and N463. Residues V516–L536 traverse the membrane as a helical segment. Residues N537–S882 lie on the Cytoplasmic side of the membrane. A Phosphothreonine modification is found at T589. In terms of domain architecture, Protein kinase spans L593–I876. Residues I599 to V607 and K621 each bind ATP. The residue at position 770 (Y770) is a Phosphotyrosine.

Belongs to the protein kinase superfamily. Ser/Thr protein kinase family.

Its subcellular location is the cell membrane. It catalyses the reaction L-seryl-[protein] + ATP = O-phospho-L-seryl-[protein] + ADP + H(+). The catalysed reaction is L-threonyl-[protein] + ATP = O-phospho-L-threonyl-[protein] + ADP + H(+). The polypeptide is Probable LRR receptor-like serine/threonine-protein kinase At1g12460 (Arabidopsis thaliana (Mouse-ear cress)).